Consider the following 215-residue polypeptide: Probable transaldolase (215 aa).

The active-site Schiff-base intermediate with substrate is the lysine 83.

It belongs to the transaldolase family. Type 3B subfamily.

The protein localises to the cytoplasm. It catalyses the reaction D-sedoheptulose 7-phosphate + D-glyceraldehyde 3-phosphate = D-erythrose 4-phosphate + beta-D-fructose 6-phosphate. The protein operates within carbohydrate degradation; pentose phosphate pathway; D-glyceraldehyde 3-phosphate and beta-D-fructose 6-phosphate from D-ribose 5-phosphate and D-xylulose 5-phosphate (non-oxidative stage): step 2/3. Functionally, transaldolase is important for the balance of metabolites in the pentose-phosphate pathway. The polypeptide is Probable transaldolase (Clostridium perfringens (strain SM101 / Type A)).